The primary structure comprises 376 residues: Chaperone protein DnaJ (376 aa).

A J domain is found at 4 to 68 (DYYQLLGVAR…ETRARYDQFG (65 aa)). The CR-type zinc-finger motif lies at 135 to 217 (GGEKEIRVTH…CGGAGRLRRP (83 aa)). Residues C148, C151, C165, C168, C191, C194, C205, and C208 each coordinate Zn(2+). CXXCXGXG motif repeat units follow at residues 148–155 (CGTCQGSG), 165–172 (CTTCGGAG), 191–198 (CPTCEGSG), and 205–212 (CDDCGGAG).

This sequence belongs to the DnaJ family. Homodimer. The cofactor is Zn(2+).

Its subcellular location is the cytoplasm. Its function is as follows. Participates actively in the response to hyperosmotic and heat shock by preventing the aggregation of stress-denatured proteins and by disaggregating proteins, also in an autonomous, DnaK-independent fashion. Unfolded proteins bind initially to DnaJ; upon interaction with the DnaJ-bound protein, DnaK hydrolyzes its bound ATP, resulting in the formation of a stable complex. GrpE releases ADP from DnaK; ATP binding to DnaK triggers the release of the substrate protein, thus completing the reaction cycle. Several rounds of ATP-dependent interactions between DnaJ, DnaK and GrpE are required for fully efficient folding. Also involved, together with DnaK and GrpE, in the DNA replication of plasmids through activation of initiation proteins. The sequence is that of Chaperone protein DnaJ from Synechococcus sp. (strain ATCC 27144 / PCC 6301 / SAUG 1402/1) (Anacystis nidulans).